The following is a 199-amino-acid chain: Peroxiredoxin-1 (199 aa).

The 160-residue stretch at 6–165 folds into the Thioredoxin domain; sequence AYIGKLAPDF…TLRLVQAFQF (160 aa). The Cysteine sulfenic acid (-SOH) intermediate role is filled by cysteine 52.

This sequence belongs to the peroxiredoxin family. AhpC/Prx1 subfamily. As to quaternary structure, homodimer; disulfide-linked, upon oxidation. 5 homodimers assemble to form a ring-like decamer. Interacts with GDPD5; forms a mixed-disulfide with GDPD5. Interacts with SESN1 and SESN2. Interacts with FAM107A. In terms of processing, the enzyme can be inactivated by further oxidation of the cysteine sulfenic acid (C(P)-SOH) to sulphinic acid (C(P)-SO2H) instead of its condensation to a disulfide bond. It can be reactivated by forming a transient disulfide bond with sulfiredoxin SRXN1, which reduces the cysteine sulfinic acid in an ATP- and Mg-dependent manner.

The protein localises to the cytoplasm. The enzyme catalyses a hydroperoxide + [thioredoxin]-dithiol = an alcohol + [thioredoxin]-disulfide + H2O. In terms of biological role, thiol-specific peroxidase that catalyzes the reduction of hydrogen peroxide and organic hydroperoxides to water and alcohols, respectively. Plays a role in cell protection against oxidative stress by detoxifying peroxides and as sensor of hydrogen peroxide-mediated signaling events. Might participate in the signaling cascades of growth factors and tumor necrosis factor-alpha by regulating the intracellular concentrations of H(2)O(2). Reduces an intramolecular disulfide bond in GDPD5 that gates the ability to GDPD5 to drive postmitotic motor neuron differentiation. The protein is Peroxiredoxin-1 (PRDX1) of Gekko japonicus (Schlegel's Japanese gecko).